Consider the following 383-residue polypeptide: 1-deoxy-D-xylulose 5-phosphate reductoisomerase (383 aa).

NADPH is bound by residues threonine 10, glycine 11, serine 12, isoleucine 13, asparagine 38, and asparagine 121. Lysine 122 provides a ligand contact to 1-deoxy-D-xylulose 5-phosphate. Glutamate 123 is a binding site for NADPH. Residue aspartate 147 coordinates Mn(2+). Residues serine 148, glutamate 149, serine 172, and histidine 195 each contribute to the 1-deoxy-D-xylulose 5-phosphate site. Glutamate 149 serves as a coordination point for Mn(2+). Glycine 201 lines the NADPH pocket. The 1-deoxy-D-xylulose 5-phosphate site is built by serine 208, asparagine 213, lysine 214, and glutamate 217. Glutamate 217 serves as a coordination point for Mn(2+).

The protein belongs to the DXR family. The cofactor is Mg(2+). Requires Mn(2+) as cofactor.

The enzyme catalyses 2-C-methyl-D-erythritol 4-phosphate + NADP(+) = 1-deoxy-D-xylulose 5-phosphate + NADPH + H(+). Its pathway is isoprenoid biosynthesis; isopentenyl diphosphate biosynthesis via DXP pathway; isopentenyl diphosphate from 1-deoxy-D-xylulose 5-phosphate: step 1/6. Its function is as follows. Catalyzes the NADPH-dependent rearrangement and reduction of 1-deoxy-D-xylulose-5-phosphate (DXP) to 2-C-methyl-D-erythritol 4-phosphate (MEP). The sequence is that of 1-deoxy-D-xylulose 5-phosphate reductoisomerase from Ruthia magnifica subsp. Calyptogena magnifica.